A 276-amino-acid chain; its full sequence is Cerberus (276 aa).

A signal peptide spans 1–20; the sequence is MLLCVLKIYIIFCLVNDGAG. Residues Asn-103, Asn-118, and Asn-160 are each glycosylated (N-linked (GlcNAc...) asparagine). Disulfide bonds link Cys-175–Cys-221, Cys-189–Cys-235, Cys-199–Cys-251, and Cys-203–Cys-253. Residues 175-259 form the CTCK domain; the sequence is CKTLPFTQNI…ECACEAHKNN (85 aa). Residue Asn-234 is glycosylated (N-linked (GlcNAc...) asparagine).

It belongs to the DAN family. In terms of assembly, the long chain interacts with nodal/nr-1, bmp4 and wnt8, thereby inhibiting their function. The short chain interacts with nodal/nr-1 but not bmp4 or wnt8. In terms of tissue distribution, expressed in the anterior endomesoderm of the early gastrula with expression expanded laterally around the margin at the endoderm/mesoderm boundary.

Its subcellular location is the secreted. Its function is as follows. Inhibits wnt, nodal/nr-1 and bmp signaling in the embryo to promote head formation and anterior neural induction. Within the endoderm, acts as an essential mediator of nodal/nr-1-induced cardiogenesis in the overlying mesoderm. The protein is Cerberus of Xenopus tropicalis (Western clawed frog).